The following is a 997-amino-acid chain: Protein HIR2 (997 aa).

5 WD repeats span residues 10-48 (GISG…DTAF), 117-152 (VSQS…TRSA), 153-194 (NKKE…VVYH), 274-319 (VHSP…PLFA), and 323-362 (ISDS…LGKT). Positions 408–584 (ADNSSNILST…RKPKEDALGN (177 aa)) are disordered. Residues 409–446 (DNSSNILSTDTNTNEKNLSTVNTTEPQTNSQSSSYNNK) show a composition bias toward polar residues. The segment covering 464-480 (SDEKAKNLEARPIEAKS) has biased composition (basic and acidic residues). Positions 491-501 (SKSSSVTTSDN) are enriched in polar residues. Basic and acidic residues predominate over residues 518 to 538 (TEKKTKPDKKSIKSENGESKV). The span at 539–567 (NKAQNTISPKESNTTDNKSTTPDFKNPSY) shows a compositional bias: polar residues. WD repeat units lie at residues 665–706 (LFQD…IIPP) and 708–745 (TIGV…LEFP).

The protein belongs to the WD repeat HIR1 family.

The protein resides in the nucleus. Required for replication-independent chromatin assembly and for the periodic repression of histone gene transcription during the cell cycle. The protein is Protein HIR2 (HIR2) of Candida glabrata (strain ATCC 2001 / BCRC 20586 / JCM 3761 / NBRC 0622 / NRRL Y-65 / CBS 138) (Yeast).